The primary structure comprises 323 residues: MAALIAENFRFLSLFFKSKDVMIFNGLVALGTVGSQELFSVVAFHCPCSPARNYLYGLTAIGVPALALFLIGVILNNHTWNLVAECQYRRAKNCSAAPNFLLLSSILGRAAVAPVTWSVISLLRGEAYVCALSEFVDPSSLTAGDKGFPPAHATEVLARFPCGEGPANLSSFREEVSRRLKYESQLFGWLLIGVVAILVFLTKCLKHYCSPLSYRQEAYWAQYRTNEDQLFQRTAEVHSRVLAANNVRRFFGFVALNKDDEELVAKFPVEGTQPRPQWNAITGVYLYRENQGLPLYSRLHKWAQGLTGNGTAPDNVEMALLTA.

Residues Met-1–Val-21 are Cytoplasmic-facing. A central pore region spans residues Leu-14–Phe-39. A helical membrane pass occupies residues Met-22–Ala-43. At Phe-44–Arg-52 the chain is on the extracellular side. Intrachain disulfides connect Cys-46/Cys-130 and Cys-48/Cys-162. Residues Asn-53–Asn-76 traverse the membrane as a helical segment. Over Asn-77–Leu-101 the chain is Cytoplasmic. The helical transmembrane segment at Leu-102–Leu-132 threads the bilayer. Over Ser-133 to Arg-179 the chain is Extracellular. The hemichannel docking stretch occupies residues Asp-145–His-152. The helical transmembrane segment at Leu-180–Lys-206 threads the bilayer. Topologically, residues His-207–Ala-323 are cytoplasmic. The tract at residues Tyr-214–Phe-251 is intersubunit interaction.

The protein belongs to the CALHM family. In terms of assembly, homo-undecamer. Two undecameric hemichannels can assemble in a head-to-head manner to form a gap junction. Neuron, astrocyte, and microglia.

The protein localises to the cell membrane. It catalyses the reaction ATP(in) = ATP(out). Its activity is regulated as follows. Inhibited by divalent cations such as Co(2+) and Ni(2+). Its function is as follows. Pore-forming subunit of Ca(2+) homeostasis modulator channels. Mediates ATP release from astrocytes and ATP-induced Ca(2+) influx in microglia thus regulating neuronal ATP and Ca(2+) homeostasis, synaptic transmission and neuroinflammatory response. May form intercellular gap junctions. The gating mechanism remains unknown. The protein is Calcium homeostasis modulator protein 2 of Mus musculus (Mouse).